A 294-amino-acid polypeptide reads, in one-letter code: Acetylglutamate kinase (294 aa).

Residues 63 to 64 (GG), Arg-85, and Asn-188 contribute to the substrate site.

Belongs to the acetylglutamate kinase family. ArgB subfamily.

Its subcellular location is the cytoplasm. It catalyses the reaction N-acetyl-L-glutamate + ATP = N-acetyl-L-glutamyl 5-phosphate + ADP. The protein operates within amino-acid biosynthesis; L-arginine biosynthesis; N(2)-acetyl-L-ornithine from L-glutamate: step 2/4. Catalyzes the ATP-dependent phosphorylation of N-acetyl-L-glutamate. In Methanococcus maripaludis (strain C6 / ATCC BAA-1332), this protein is Acetylglutamate kinase.